Here is a 94-residue protein sequence, read N- to C-terminus: Protein FAM24B (94 aa).

Positions methionine 1–cysteine 21 are cleaved as a signal peptide.

Belongs to the FAM24 family.

It localises to the secreted. This chain is Protein FAM24B (FAM24B), found in Homo sapiens (Human).